A 208-amino-acid chain; its full sequence is MEPSTRAVFDLGRVRDAVAPVLASHGVTLVDLEWITERAGWTLRLTIERENADDAGGGVTLEDCADVSRDVSSVLDVEDLIPNHYNLEVSSPGLDRRLRTAAEFARFLGRTAKVKLARPAPDGQRLLRGELLEAPEGQVAVLVDGKRIAVPFADVAEARLVFELTAQPKKGQRQGKEPAKESGQKKQLAEAAPRSGSKRSERGSEKRK.

Residues 165-208 (TAQPKKGQRQGKEPAKESGQKKQLAEAAPRSGSKRSERGSEKRK) form a disordered region. 2 stretches are compositionally biased toward basic and acidic residues: residues 174 to 188 (QGKEPAKESGQKKQL) and 198 to 208 (KRSERGSEKRK).

It belongs to the RimP family.

Its subcellular location is the cytoplasm. Its function is as follows. Required for maturation of 30S ribosomal subunits. In Sorangium cellulosum (strain So ce56) (Polyangium cellulosum (strain So ce56)), this protein is Ribosome maturation factor RimP.